The sequence spans 338 residues: Putative pectinesterase 63 (338 aa).

A signal peptide spans 1–24 (MGYNYVSLIVTILLVVITSPVVFG). Substrate contacts are provided by Thr-116 and Gln-151. The active-site Proton donor is the Asp-174. The active-site Nucleophile is Asp-195. Arg-252 provides a ligand contact to substrate.

The protein belongs to the pectinesterase family.

The protein resides in the secreted. It is found in the cell wall. It catalyses the reaction [(1-&gt;4)-alpha-D-galacturonosyl methyl ester](n) + n H2O = [(1-&gt;4)-alpha-D-galacturonosyl](n) + n methanol + n H(+). Its pathway is glycan metabolism; pectin degradation; 2-dehydro-3-deoxy-D-gluconate from pectin: step 1/5. Functionally, acts in the modification of cell walls via demethylesterification of cell wall pectin. This is Putative pectinesterase 63 (PME63) from Arabidopsis thaliana (Mouse-ear cress).